The sequence spans 499 residues: Phenylalanine--tRNA ligase alpha subunit B (499 aa).

Residues T330, 373-375 (QIE), and Y413 contribute to the L-phenylalanine site. Position 415 (E415) interacts with Mg(2+). F439 serves as a coordination point for L-phenylalanine.

The protein belongs to the class-II aminoacyl-tRNA synthetase family. Phe-tRNA synthetase alpha subunit type 2 subfamily. In terms of assembly, heterotetramer; dimer of two heterodimers formed by alpha and beta subunits. It depends on Mg(2+) as a cofactor.

Its subcellular location is the cytoplasm. The enzyme catalyses tRNA(Phe) + L-phenylalanine + ATP = L-phenylalanyl-tRNA(Phe) + AMP + diphosphate + H(+). The protein is Phenylalanine--tRNA ligase alpha subunit B (farsa-b) of Xenopus laevis (African clawed frog).